The primary structure comprises 448 residues: Trigger factor (448 aa).

The 87-residue stretch at 167 to 253 (GSIVRVDFVE…VKDIKRRDIP (87 aa)) folds into the PPIase FKBP-type domain.

The protein belongs to the FKBP-type PPIase family. Tig subfamily.

Its subcellular location is the cytoplasm. It carries out the reaction [protein]-peptidylproline (omega=180) = [protein]-peptidylproline (omega=0). Its function is as follows. Involved in protein export. Acts as a chaperone by maintaining the newly synthesized protein in an open conformation. Functions as a peptidyl-prolyl cis-trans isomerase. This chain is Trigger factor, found in Borrelia duttonii (strain Ly).